A 324-amino-acid chain; its full sequence is Galactosylgalactosylxylosylprotein 3-beta-glucuronosyltransferase 2 (324 aa).

At 1–2 (MK) the chain is on the cytoplasmic side. The helical; Signal-anchor for type II membrane protein transmembrane segment at 3-23 (SALCSRFFILLPWILIVIIML) threads the bilayer. Topologically, residues 24–324 (DVDPRRPAPQ…YHLDTVNIEV (301 aa)) are lumenal. A disordered region spans residues 50 to 78 (SRVPLRRSSPGRDAAEKRNESRPQLQPEP). An N-linked (GlcNAc...) asparagine glycan is attached at Asn-68. Residues 88–90 (PTY), Asp-119, Arg-156, Arg-161, and 186–188 (DDD) contribute to the UDP-alpha-D-glucuronate site. Asp-188 lines the Mn(2+) pocket. Residues 235–244 (WREDRPFAID) are interaction with galactose moiety of substrate glycoprotein. Glu-274 acts as the Proton donor/acceptor in catalysis. N-linked (GlcNAc...) asparagine glycosylation occurs at Asn-293. 301 to 303 (HTR) contacts UDP-alpha-D-glucuronate.

This sequence belongs to the glycosyltransferase 43 family. As to quaternary structure, homodimer. It depends on Mn(2+) as a cofactor. Expressed in brain, but not in liver and kidney.

It is found in the golgi apparatus membrane. It carries out the reaction 3-O-(beta-D-galactosyl-(1-&gt;3)-beta-D-galactosyl-(1-&gt;4)-beta-D-xylosyl)-L-seryl-[protein] + UDP-alpha-D-glucuronate = 3-O-(beta-D-GlcA-(1-&gt;3)-beta-D-Gal-(1-&gt;3)-beta-D-Gal-(1-&gt;4)-beta-D-Xyl)-L-seryl-[protein] + UDP + H(+). Its pathway is protein modification; protein glycosylation. In terms of biological role, involved in the biosynthesis of L2/HNK-1 carbohydrate epitope on both glycolipids and glycoproteins. The sequence is that of Galactosylgalactosylxylosylprotein 3-beta-glucuronosyltransferase 2 (B3gat2) from Mus musculus (Mouse).